The primary structure comprises 228 residues: NAD(P)H-hydrate epimerase (228 aa).

The region spanning 9–209 (VRAVERLAHR…LLGLTPAFLA (201 aa)) is the YjeF N-terminal domain. 53–57 (NNGGD) is a binding site for (6S)-NADPHX. 2 residues coordinate K(+): Asn54 and Asp115. (6S)-NADPHX contacts are provided by residues 119-125 (GIGLARP) and Asp148. Ser151 serves as a coordination point for K(+).

Belongs to the NnrE/AIBP family. Requires K(+) as cofactor.

The catalysed reaction is (6R)-NADHX = (6S)-NADHX. The enzyme catalyses (6R)-NADPHX = (6S)-NADPHX. Catalyzes the epimerization of the S- and R-forms of NAD(P)HX, a damaged form of NAD(P)H that is a result of enzymatic or heat-dependent hydration. This is a prerequisite for the S-specific NAD(P)H-hydrate dehydratase to allow the repair of both epimers of NAD(P)HX. This Bordetella bronchiseptica (strain ATCC BAA-588 / NCTC 13252 / RB50) (Alcaligenes bronchisepticus) protein is NAD(P)H-hydrate epimerase.